A 386-amino-acid polypeptide reads, in one-letter code: Succinate--CoA ligase [ADP-forming] subunit beta (386 aa).

The 236-residue stretch at 9–244 (KEILRNFGVP…LDEEDPAEVE (236 aa)) folds into the ATP-grasp domain. ATP contacts are provided by residues Lys-46, 53–55 (GRG), Glu-99, Ala-102, and Glu-107. The Mg(2+) site is built by Asn-199 and Asp-213. Residues Asn-264 and 321–323 (GIM) contribute to the substrate site.

Belongs to the succinate/malate CoA ligase beta subunit family. Heterotetramer of two alpha and two beta subunits. Mg(2+) is required as a cofactor.

The catalysed reaction is succinate + ATP + CoA = succinyl-CoA + ADP + phosphate. It catalyses the reaction GTP + succinate + CoA = succinyl-CoA + GDP + phosphate. The protein operates within carbohydrate metabolism; tricarboxylic acid cycle; succinate from succinyl-CoA (ligase route): step 1/1. Succinyl-CoA synthetase functions in the citric acid cycle (TCA), coupling the hydrolysis of succinyl-CoA to the synthesis of either ATP or GTP and thus represents the only step of substrate-level phosphorylation in the TCA. The beta subunit provides nucleotide specificity of the enzyme and binds the substrate succinate, while the binding sites for coenzyme A and phosphate are found in the alpha subunit. The sequence is that of Succinate--CoA ligase [ADP-forming] subunit beta from Polaromonas naphthalenivorans (strain CJ2).